The following is a 423-amino-acid chain: Zinc finger protein Gfi-1 (423 aa).

An SNAG domain region spans residues 1-20 (MPRSFLVKSKKAHSYHQPRS). Residues 1–102 (MPRSFLVKSK…PPSPSVSPAS (102 aa)) form a disordered region. 2 positions are modified to phosphoserine: Ser20 and Ser57. Residues 48-57 (SKMEPRERLS) are compositionally biased toward basic and acidic residues. Residues 141 to 258 (RQCSALERSA…LLLGGGSYKC (118 aa)) are required for interaction with RELA. C2H2-type zinc fingers lie at residues 256–279 (YKCI…RRSH), 285–307 (FACE…KAVH), 313–335 (FDCK…LLIH), 341–363 (YPCQ…TFIH), 369–391 (HKCQ…SRKH), and 397–420 (FGCD…ETQH).

In terms of assembly, interacts with U2AF1L4. Component of RCOR-GFI-KDM1A-HDAC complexes. Interacts directly with RCOR1, KDM1A and HDAC2. Also interacts with HDAC1. regions. Interacts (via the zinc-finger domain) with ARIH2; the interaction prevents GFI1 ubiquitination and proteasomal degradation. Interacts with PIAS3; the interaction relieves the inhibitory effect of PIAS3 on STAT3-mediated transcriptional activity. Forms a complex with EHMT2 and HDAC1 to promote 'Lys-9' dimethylation of H3 (H3K9Me2) and repress expression of target genes. Interacts directly with EHMT2. Component of the GFI1-AJUBA-HDAC1 repressor complex. Interacts directly with AJUBA (via ITS LIM domains); the interaction results in the HDAC-dependent corepression of a subset of GFI1 target genes and, occurs independent of the SNAG domain. Interacts with SPI1; the interaction inhibits SPI1 transcriptional activity targeted at macrophage-specific genes, repressing macrophage differentiation of myeloid progenitor cells and promoting granulocyte commitment. Interacts with RUNX1T1; the interaction represses HDAC-mediated transcriptional activity. Interacts with RELA; the interaction occurs on liposaccharide (LPS) stimulation controls RELA DNA binding activity and regulates endotoxin-mediated TOLL-like receptor inflammatory response. Interacts (via the C-terminal zinc fingers) with ZBTB17; the interaction results in the recruitment of GFI1 to the CDKN1A/p21 promoter and repression of CDKN1A/p21 transcription. Ubiquitinated. As to expression, restricted to lymphoid tissues and testes in adult animals.

It is found in the nucleus. In terms of biological role, transcription repressor essential for hematopoiesis. Functions in a cell-context and development-specific manner. Binds to 5'-TAAATCAC[AT]GCA-3' in the promoter region of a large number of genes. Component of several complexes, including the EHMT2-GFI1-HDAC1, AJUBA-GFI1-HDAC1 and RCOR-GFI-KDM1A-HDAC complexes, that suppress, via histone deacetylase (HDAC) recruitment, a number of genes implicated in multilineage blood cell development. Regulates neutrophil differentiation, promotes proliferation of lymphoid cells, and is required for granulocyte development. Inhibits SPI1 transcriptional activity at macrophage-specific genes, repressing macrophage differentiation of myeloid progenitor cells and promoting granulocyte commitment. Mediates, together with U2AF1L4, the alternative splicing of CD45 and controls T-cell receptor signaling. Regulates the endotoxin-mediated Toll-like receptor (TLR) inflammatory response by antagonizing RELA. Cooperates with CBFA2T2 to regulate ITGB1-dependent neurite growth. Controls cell-cycle progression by repressing CDKNIA/p21 transcription in response to TGFB1 via recruitment of GFI1 by ZBTB17 to the CDKNIA/p21 and CDKNIB promoters. Required for the maintenance of inner ear hair cells. In addition to its role in transcription, acts as a substrate adapter for PRMT1 in the DNA damage response: facilitates the recognition of TP53BP1 and MRE11 substrates by PRMT1, promoting their methylation and the DNA damage response. In Rattus norvegicus (Rat), this protein is Zinc finger protein Gfi-1 (Gfi1).